The chain runs to 326 residues: Cobalamin biosynthesis protein CobD (326 aa).

Transmembrane regions (helical) follow at residues 58-78, 81-101, 157-177, and 304-324; these read MRGV…GVVL, LFDV…AVFL, FSDG…PGLL, and VFYR…LPFL.

Belongs to the CobD/CbiB family.

The protein localises to the cell membrane. It functions in the pathway cofactor biosynthesis; adenosylcobalamin biosynthesis. In terms of biological role, converts cobyric acid to cobinamide by the addition of aminopropanol on the F carboxylic group. This is Cobalamin biosynthesis protein CobD from Sinorhizobium fredii (strain NBRC 101917 / NGR234).